A 346-amino-acid polypeptide reads, in one-letter code: Glycerol-1-phosphate dehydrogenase [NAD(P)+] (346 aa).

NAD(+) is bound by residues 93–97 (GTIID) and 115–118 (TTAS). Aspartate 120 contributes to the substrate binding site. Serine 124 is a binding site for NAD(+). Aspartate 167 contacts substrate. 2 residues coordinate Zn(2+): aspartate 167 and histidine 247. Histidine 251 is a binding site for substrate. Position 263 (histidine 263) interacts with Zn(2+).

It belongs to the glycerol-1-phosphate dehydrogenase family. The cofactor is Zn(2+).

The protein localises to the cytoplasm. It carries out the reaction sn-glycerol 1-phosphate + NAD(+) = dihydroxyacetone phosphate + NADH + H(+). The enzyme catalyses sn-glycerol 1-phosphate + NADP(+) = dihydroxyacetone phosphate + NADPH + H(+). The protein operates within membrane lipid metabolism; glycerophospholipid metabolism. Functionally, catalyzes the NAD(P)H-dependent reduction of dihydroxyacetonephosphate (DHAP or glycerone phosphate) to glycerol 1-phosphate (G1P). The G1P thus generated is used as the glycerophosphate backbone of phospholipids in the cellular membranes of Archaea. The chain is Glycerol-1-phosphate dehydrogenase [NAD(P)+] from Pyrococcus furiosus (strain ATCC 43587 / DSM 3638 / JCM 8422 / Vc1).